The chain runs to 235 residues: 7-cyano-7-deazaguanine synthase (235 aa).

13–23 provides a ligand contact to ATP; that stretch reads FSGGLDSTTCL. Zn(2+) contacts are provided by C197, C207, C210, and C213.

The protein belongs to the QueC family. It depends on Zn(2+) as a cofactor.

The catalysed reaction is 7-carboxy-7-deazaguanine + NH4(+) + ATP = 7-cyano-7-deazaguanine + ADP + phosphate + H2O + H(+). It functions in the pathway purine metabolism; 7-cyano-7-deazaguanine biosynthesis. In terms of biological role, catalyzes the ATP-dependent conversion of 7-carboxy-7-deazaguanine (CDG) to 7-cyano-7-deazaguanine (preQ(0)). This chain is 7-cyano-7-deazaguanine synthase, found in Solidesulfovibrio magneticus (strain ATCC 700980 / DSM 13731 / RS-1) (Desulfovibrio magneticus).